Reading from the N-terminus, the 266-residue chain is Putative carbamate hydrolase RutD (266 aa).

An AB hydrolase-1 domain is found at 14 to 115; the sequence is PVVVLISGLG…TVLVSVNGWL (102 aa).

Belongs to the AB hydrolase superfamily. Hydrolase RutD family.

It carries out the reaction carbamate + 2 H(+) = NH4(+) + CO2. In terms of biological role, involved in pyrimidine catabolism. May facilitate the hydrolysis of carbamate, a reaction that can also occur spontaneously. The sequence is that of Putative carbamate hydrolase RutD from Escherichia coli O9:H4 (strain HS).